The sequence spans 445 residues: Methionine aminopeptidase 2 (445 aa).

The disordered stretch occupies residues 1 to 80; that stretch reads MAAQVASGVG…TSKVQTEPPR (80 aa). The span at 57-71 shows a compositional bias: basic residues; the sequence is AKKKKKKTKKKKKGT. H195 contacts substrate. A divalent metal cation is bound by residues D215, D226, and H295. Position 303 (H303) interacts with substrate. E331 and E426 together coordinate a divalent metal cation.

It belongs to the peptidase M24A family. Methionine aminopeptidase eukaryotic type 2 subfamily. Requires Co(2+) as cofactor. Zn(2+) serves as cofactor. Mn(2+) is required as a cofactor. The cofactor is Fe(2+).

It localises to the cytoplasm. It carries out the reaction Release of N-terminal amino acids, preferentially methionine, from peptides and arylamides.. In terms of biological role, cotranslationally removes the N-terminal methionine from nascent proteins. The N-terminal methionine is often cleaved when the second residue in the primary sequence is small and uncharged (Met-Ala-, Cys, Gly, Pro, Ser, Thr, or Val). The polypeptide is Methionine aminopeptidase 2 (Paracoccidioides brasiliensis (strain Pb03)).